A 37-amino-acid polypeptide reads, in one-letter code: Mu-agatoxin-Aa1d (37 aa).

Disulfide bonds link C2–C18, C9–C23, C17–C33, and C25–C31. N37 carries the asparagine amide modification.

It belongs to the neurotoxin 07 (Beta/delta-agtx) family. 03 (aga-4) subfamily. Aga sub-subfamily. Expressed by the venom gland.

Its subcellular location is the secreted. Functionally, insecticidal neurotoxin that induces an irreversible spastic paralysis when injected into insects. Modifies presynaptic voltage-gated sodium channels (Nav), causing them to open at the normal resting potential of the nerve. This leads to spontaneous release of neurotransmitter and repetitive action potentials in motor neurons. The protein is Mu-agatoxin-Aa1d of Agelenopsis aperta (North American funnel-web spider).